We begin with the raw amino-acid sequence, 276 residues long: NAD kinase (276 aa).

Asp-61 serves as the catalytic Proton acceptor. NAD(+)-binding positions include 61-62 (DG), 134-135 (ND), Arg-145, Lys-162, Asp-164, Val-172, 175-180 (TAYSFS), and Gln-234.

Belongs to the NAD kinase family. A divalent metal cation serves as cofactor.

The protein resides in the cytoplasm. It carries out the reaction NAD(+) + ATP = ADP + NADP(+) + H(+). Involved in the regulation of the intracellular balance of NAD and NADP, and is a key enzyme in the biosynthesis of NADP. Catalyzes specifically the phosphorylation on 2'-hydroxyl of the adenosine moiety of NAD to yield NADP. The protein is NAD kinase of Clostridium perfringens (strain 13 / Type A).